Reading from the N-terminus, the 437-residue chain is Immunoglobulin superfamily member 11 (437 aa).

A signal peptide spans methionine 1 to serine 22. Positions leucine 23 to threonine 136 constitute an Ig-like V-type domain. Residues leucine 23 to glycine 241 are Extracellular-facing. Disulfide bonds link cysteine 44-cysteine 120 and cysteine 165-cysteine 215. N-linked (GlcNAc...) asparagine glycosylation is present at asparagine 102. Residues proline 144–serine 234 form the Ig-like C2-type domain. Residues leucine 242 to leucine 262 form a helical membrane-spanning segment. Over glycine 263–valine 437 the chain is Cytoplasmic. At arginine 379 the chain carries Omega-N-methylarginine. The tract at residues serine 382–leucine 405 is disordered.

In terms of processing, N-glycosylated.

It localises to the cell membrane. In terms of biological role, functions as a cell adhesion molecule through homophilic interaction. Stimulates cell growth. This is Immunoglobulin superfamily member 11 (IGSF11) from Bos taurus (Bovine).